The primary structure comprises 114 residues: Gonadotropin subunit beta-1 (114 aa).

An N-terminal signal peptide occupies residues 1–19; that stretch reads MQLVLMAAVLALAEVGCFG. Disulfide bonds link cysteine 20-cysteine 66, cysteine 32-cysteine 80, cysteine 37-cysteine 114, cysteine 43-cysteine 92, cysteine 47-cysteine 94, and cysteine 97-cysteine 104. A glycan (N-linked (GlcNAc...) asparagine) is linked at asparagine 24.

The protein belongs to the glycoprotein hormones subunit beta family. In terms of assembly, heterodimer of an alpha and a beta chain.

It is found in the secreted. Functionally, involved in gametogenesis and steroidogenesis. The protein is Gonadotropin subunit beta-1 (cgba) of Fundulus heteroclitus (Killifish).